We begin with the raw amino-acid sequence, 622 residues long: MALLQIAEPGLSAAPHQRKLAVGIDLGTTNSLVATVRSGQAETLGDNNNQHLLPSVVSYTAEQVVVGEQAKHDASLDPANTIVSVKRFLGRSLNDIRRSYPDLPYDFDESNPNSPLLNVTGRQVNPVEVSSEILTTLRLRAEQSLGEELSGAVVTVPAYFDDAQRQGTKDAAQLAGLKVLRLLNEPTAAAIAYGLDTAQEGVIAVYDLGGGTFDISILRLSKGVFEVLATGGDSALGGDDFDHMIVKHFRQQLGLEGALSKRLHRVLLDKAKFAKESLSDNDTVTVDFADDEQKLLSLSISRETFQGLIADLTKSTLRACRRALKDAELEKDEVLEVVMVGGSTRVPYVREQVGEFFGRTPLTSIDPDKVVAIGASIQADILVGNKPDGEMLLLDVLPLSLGLETMGGLVEKVIHRNTTIPVAKAQEFTTFKDGQTAMMIHVLQGERELVDDCRSLAKFTLHGIPPMAAGAAHIRVTFQVDADGLLNVMAMEKSSGVQAEIQVKPSYGLDESQISDMLKASMQNATGDMQARMLKEQQVEAARVHEALQAALNADGAELLSAAEIGTIQASLEVLDIAGKNDDIDAIKQAISAADAASQIFAEKRMDHSIKKALAGHTVDSI.

It belongs to the heat shock protein 70 family.

In terms of biological role, chaperone involved in the maturation of iron-sulfur cluster-containing proteins. Has a low intrinsic ATPase activity which is markedly stimulated by HscB. In Pseudoalteromonas atlantica (strain T6c / ATCC BAA-1087), this protein is Chaperone protein HscA homolog.